The sequence spans 329 residues: Vacuolar protein sorting-associated protein 26B-like (329 aa).

The protein belongs to the VPS26 family.

It is found in the cytoplasm. The protein localises to the membrane. In terms of biological role, probable component of the retromer complex, a complex required to retrieve lysosomal enzyme receptors (IGF2R and M6PR) from endosomes to the trans-Golgi network. This is Vacuolar protein sorting-associated protein 26B-like (vps26bl) from Danio rerio (Zebrafish).